The following is a 614-amino-acid chain: Asparagine synthetase [glutamine-hydrolyzing] 3 (614 aa).

Cysteine 2 (for GATase activity) is an active-site residue. A Glutamine amidotransferase type-2 domain is found at 2 to 216 (CGITGWVDFK…PAHALTFSKD (215 aa)). L-glutamine contacts are provided by residues 50–54 (RLAVV), 77–79 (NGE), and aspartate 102. Residue 377-378 (SG) participates in ATP binding.

The protein belongs to the asparagine synthetase family.

It carries out the reaction L-aspartate + L-glutamine + ATP + H2O = L-asparagine + L-glutamate + AMP + diphosphate + H(+). The protein operates within amino-acid biosynthesis; L-asparagine biosynthesis; L-asparagine from L-aspartate (L-Gln route): step 1/1. Functionally, asparagine synthetase involved in sporulation. This Bacillus subtilis (strain 168) protein is Asparagine synthetase [glutamine-hydrolyzing] 3 (asnO).